Here is a 580-residue protein sequence, read N- to C-terminus: Tricyclene synthase TPS4, chloroplastic (580 aa).

Residues 1 to 41 (MLLNSSFISLPSFFKSQELGRTNLLIHRNGSPLLCYATNTN) constitute a chloroplast transit peptide. (2E)-geranyl diphosphate is bound by residues Arg296, Asp334, Asp338, Arg475, and Asn478. The Mg(2+) site is built by Asp334 and Asp338. A DDXXD motif motif is present at residues 334–338 (DDIYD). 3 residues coordinate Mg(2+): Asn478, Thr482, and Glu486.

Belongs to the terpene synthase family. Tpsb subfamily. The cofactor is Mg(2+). Mn(2+) serves as cofactor. Expressed in leaves.

Its subcellular location is the plastid. It is found in the chloroplast stroma. It catalyses the reaction (2E)-geranyl diphosphate = tricyclene + diphosphate. The catalysed reaction is (2E)-geranyl diphosphate = (E)-beta-ocimene + diphosphate. The protein operates within secondary metabolite biosynthesis; terpenoid biosynthesis. Its function is as follows. Promotes the emission of terpenes volatile organic compounds (VOC) in response to damage mediated by arthropod herbivores (e.g. Spodoptera exigua), probably to attract natural enemies of the herbivores. In Medicago truncatula (Barrel medic), this protein is Tricyclene synthase TPS4, chloroplastic (TPS4).